We begin with the raw amino-acid sequence, 583 residues long: Pentatricopeptide repeat-containing protein At2g33760 (583 aa).

9 PPR repeats span residues 71–105 (DDFLFNSVIKSTSKLRLPLHCVAYYRRMLSSNVSP), 106–140 (SNYTFTSVIKSCADLSALRIGKGVHCHAVVSGFGL), 141–171 (DTYVQAALVTFYSKCGDMEGARQVFDRMPEK), 172–206 (SIVAWNSLVSGFEQNGLADEAIQVFYQMRESGFEP), 207–241 (DSATFVSLLSACAQTGAVSLGSWVHQYIISEGLDL), 242–276 (NVKLGTALINLYSRCGDVGKAREVFDKMKETNVAA), 277–303 (WTAMISAYGTHGYGQQAVELFNKMEDD), 309–339 (NNVTFVAVLSACAHAGLVEEGRSVYKRMTKS), and 345–379 (GVEHHVCMVDMLGRAGFLDEAYKFIHQLDATGKAT). A type E motif region spans residues 383–458 (LWTAMLGACK…QVGYSVIEVE (76 aa)). The interval 459–489 (NKTYMFSMGDESHQETGEIYRYLETLISRCK) is type E(+) motif. The segment at 490 to 583 (EIGYAPVSEE…NGSCSCLDYW (94 aa)) is type DYW motif.

The protein belongs to the PPR family. PCMP-H subfamily.

The protein is Pentatricopeptide repeat-containing protein At2g33760 (PCMP-H6) of Arabidopsis thaliana (Mouse-ear cress).